The following is a 115-amino-acid chain: NADH-ubiquinone oxidoreductase chain 3 (115 aa).

3 helical membrane passes run leucine 3–tryptophan 23, phenylalanine 55–isoleucine 75, and isoleucine 84–tyrosine 104.

The protein belongs to the complex I subunit 3 family. In terms of assembly, core subunit of respiratory chain NADH dehydrogenase (Complex I) which is composed of 45 different subunits. Interacts with TMEM186. Interacts with TMEM242.

It localises to the mitochondrion inner membrane. It carries out the reaction a ubiquinone + NADH + 5 H(+)(in) = a ubiquinol + NAD(+) + 4 H(+)(out). In terms of biological role, core subunit of the mitochondrial membrane respiratory chain NADH dehydrogenase (Complex I) which catalyzes electron transfer from NADH through the respiratory chain, using ubiquinone as an electron acceptor. Essential for the catalytic activity of complex I. The chain is NADH-ubiquinone oxidoreductase chain 3 from Scotinomys teguina (Alston's brown mouse).